An 82-amino-acid chain; its full sequence is MNKPVHNNEHRRKRFNKKCPFVSAGWKTIDYKDTETLKKFITERGKILPRRITGVSSRFQGTLTLAIKRARHIGLLPFVAED.

It belongs to the bacterial ribosomal protein bS18 family. Part of the 30S ribosomal subunit. Forms a tight heterodimer with protein bS6.

Its function is as follows. Binds as a heterodimer with protein bS6 to the central domain of the 16S rRNA, where it helps stabilize the platform of the 30S subunit. In Chlamydia caviae (strain ATCC VR-813 / DSM 19441 / 03DC25 / GPIC) (Chlamydophila caviae), this protein is Small ribosomal subunit protein bS18.